The chain runs to 1402 residues: DNA-directed RNA polymerase subunit beta' (1402 aa).

4 residues coordinate Zn(2+): Cys-72, Cys-74, Cys-87, and Cys-90. The Mg(2+) site is built by Asp-463, Asp-465, and Asp-467. Cys-811, Cys-885, Cys-892, and Cys-895 together coordinate Zn(2+).

This sequence belongs to the RNA polymerase beta' chain family. The RNAP catalytic core consists of 2 alpha, 1 beta, 1 beta' and 1 omega subunit. When a sigma factor is associated with the core the holoenzyme is formed, which can initiate transcription. Requires Mg(2+) as cofactor. The cofactor is Zn(2+).

It carries out the reaction RNA(n) + a ribonucleoside 5'-triphosphate = RNA(n+1) + diphosphate. Its function is as follows. DNA-dependent RNA polymerase catalyzes the transcription of DNA into RNA using the four ribonucleoside triphosphates as substrates. In Paracoccus denitrificans (strain Pd 1222), this protein is DNA-directed RNA polymerase subunit beta'.